Reading from the N-terminus, the 210-residue chain is Selenoprotein T2 (210 aa).

A signal peptide spans 1-21; it reads MAEYSQTGILTALLLFTVVTV. Residues 62-65 constitute a cross-link (cysteinyl-selenocysteine (Cys-Sec)); the sequence is CISU. Position 65 (Sec-65) is a non-standard amino acid, selenocysteine.

It belongs to the SelWTH family. Selenoprotein T subfamily. Post-translationally, may contain a selenide-sulfide bond between Cys-62 and Sec-65. This bond is speculated to serve as redox-active pair. As to expression, widely expressed in the embryo.

This is Selenoprotein T2 from Danio rerio (Zebrafish).